A 139-amino-acid chain; its full sequence is Putative pre-16S rRNA nuclease (139 aa).

This sequence belongs to the YqgF nuclease family.

It is found in the cytoplasm. In terms of biological role, could be a nuclease involved in processing of the 5'-end of pre-16S rRNA. The polypeptide is Putative pre-16S rRNA nuclease (Streptococcus pyogenes serotype M2 (strain MGAS10270)).